A 321-amino-acid polypeptide reads, in one-letter code: Electron transfer flavoprotein subunit alpha (321 aa).

14 residues coordinate FAD: R211, S236, R237, Q250, V251, S254, G255, S270, S272, Q274, H275, N289, D307, and I308.

As to quaternary structure, heterodimer of an alpha and a beta subunit. Forms a ternary complex with trimethylamine dehydrogenase. Requires FAD as cofactor.

Functionally, heterodimeric electron transfer flavoprotein that accepts electrons from trimethylamine dehydrogenase. It transfers the electrons to the main respiratory chain via ETF-ubiquinone oxidoreductase (ETF dehydrogenase). The protein is Electron transfer flavoprotein subunit alpha (etfA) of Methylophilus methylotrophus (Bacterium W3A1).